The sequence spans 365 residues: 3-dehydroquinate synthase (365 aa).

NAD(+) is bound by residues 107–111 (GVIGD), 131–132 (TS), K144, and K153. The Zn(2+) site is built by E186, H251, and H268.

It belongs to the sugar phosphate cyclases superfamily. Dehydroquinate synthase family. Requires Co(2+) as cofactor. Zn(2+) is required as a cofactor. It depends on NAD(+) as a cofactor.

The protein resides in the cytoplasm. It carries out the reaction 7-phospho-2-dehydro-3-deoxy-D-arabino-heptonate = 3-dehydroquinate + phosphate. Its pathway is metabolic intermediate biosynthesis; chorismate biosynthesis; chorismate from D-erythrose 4-phosphate and phosphoenolpyruvate: step 2/7. Its function is as follows. Catalyzes the conversion of 3-deoxy-D-arabino-heptulosonate 7-phosphate (DAHP) to dehydroquinate (DHQ). This Crocosphaera subtropica (strain ATCC 51142 / BH68) (Cyanothece sp. (strain ATCC 51142)) protein is 3-dehydroquinate synthase.